The primary structure comprises 1058 residues: Translation initiation factor IF-2 (1058 aa).

Basic and acidic residues predominate over residues 1-12 (MNDTKTPGDKTL). The segment at 1–468 (MNDTKTPGDK…MTGHRGMQES (468 aa)) is disordered. Residues 54–81 (APGEAGAPSGTPAAAPAATPAPAAAAPR) show a composition bias toward low complexity. The span at 82-95 (PATPAPAAPRPAAP) shows a compositional bias: pro residues. A compositionally biased stretch (low complexity) spans 96-108 (ATPAQPAAEAKAP). Positions 109–119 (APAPTPAPAAP) are enriched in pro residues. 2 stretches are compositionally biased toward low complexity: residues 120–156 (AAPV…VEVP) and 164–228 (EPVA…QRPG). Gly residues predominate over residues 244-271 (RSGGPGSDRRGGPGGQNRPGQNRQGGSG). Residues 292-364 (ARVREVEERR…ARKRFGEETG (73 aa)) are compositionally biased toward basic and acidic residues. Residues 368–396 (GASAPSTSTARPLTPRPAGTTTTTGAPAA) are compositionally biased toward low complexity. Residues 452-461 (FRRRTQRMTG) are compositionally biased toward basic residues. The tr-type G domain maps to 555–725 (PRPPVVTIMG…SLQSEVLDLK (171 aa)). Positions 564-571 (GHVDHGKT) are G1. A GTP-binding site is contributed by 564–571 (GHVDHGKT). The interval 589 to 593 (GITQH) is G2. The tract at residues 611–614 (DTPG) is G3. Residues 611 to 615 (DTPGH) and 665 to 668 (NKID) contribute to the GTP site. Residues 665-668 (NKID) form a G4 region. The segment at 701 to 703 (SAT) is G5.

It belongs to the TRAFAC class translation factor GTPase superfamily. Classic translation factor GTPase family. IF-2 subfamily.

Its subcellular location is the cytoplasm. One of the essential components for the initiation of protein synthesis. Protects formylmethionyl-tRNA from spontaneous hydrolysis and promotes its binding to the 30S ribosomal subunits. Also involved in the hydrolysis of GTP during the formation of the 70S ribosomal complex. This Azorhizobium caulinodans (strain ATCC 43989 / DSM 5975 / JCM 20966 / LMG 6465 / NBRC 14845 / NCIMB 13405 / ORS 571) protein is Translation initiation factor IF-2.